We begin with the raw amino-acid sequence, 404 residues long: Nicotinate phosphoribosyltransferase (404 aa).

Residue His224 is modified to Phosphohistidine; by autocatalysis.

This sequence belongs to the NAPRTase family. Post-translationally, transiently phosphorylated on a His residue during the reaction cycle. Phosphorylation strongly increases the affinity for substrates and increases the rate of nicotinate D-ribonucleotide production. Dephosphorylation regenerates the low-affinity form of the enzyme, leading to product release.

The catalysed reaction is nicotinate + 5-phospho-alpha-D-ribose 1-diphosphate + ATP + H2O = nicotinate beta-D-ribonucleotide + ADP + phosphate + diphosphate. It participates in cofactor biosynthesis; NAD(+) biosynthesis; nicotinate D-ribonucleotide from nicotinate: step 1/1. In terms of biological role, catalyzes the synthesis of beta-nicotinate D-ribonucleotide from nicotinate and 5-phospho-D-ribose 1-phosphate at the expense of ATP. The polypeptide is Nicotinate phosphoribosyltransferase (Photorhabdus laumondii subsp. laumondii (strain DSM 15139 / CIP 105565 / TT01) (Photorhabdus luminescens subsp. laumondii)).